Reading from the N-terminus, the 393-residue chain is Staphopain B (393 aa).

Positions 1-36 are cleaved as a signal peptide; that stretch reads MNSSCKSRVFNIISIIMVSMLILSLGAFANNNKAKA. The propeptide occupies 37-219; it reads DSHSKQLEIN…KVEENEAIQE (183 aa). Residues C243, H340, and N360 contribute to the active site.

Belongs to the peptidase C47 family. In the cytoplasm, prematurely activated/folded SspB forms a stable non-covalent complex with SspC. Post-translationally, proteolytically cleaved by staphylococcal serine protease (SspA).

It localises to the secreted. Its activity is regulated as follows. Prematurely activated/folded staphopain B is inhibited by staphostatin B (SspC), which is probably required to protect staphylococcal cytoplasmic proteins from degradation by SspB. Also inactivated by E-64 and stimulated by EDTA. In terms of biological role, cysteine protease that plays an important role in the inhibition of host innate immune response. Degrades host elastin, fibrogen, fibronectin and kininogen. Blocks phagocytosis of opsonised S.aureus by neutrophils and monocytes by inducing their death in a proteolytic activity-dependent manner. Decreases surface expression of the 'don't eat me' signal CD31 on neutrophils. Cleaves host galectin-3/LGALS3, thereby inhibiting the neutrophil-activating ability of the lectin. The polypeptide is Staphopain B (sspB) (Staphylococcus aureus (strain NCTC 8325 / PS 47)).